Reading from the N-terminus, the 192-residue chain is Protein GrpE (192 aa).

The tract at residues 1 to 43 (MSKEEFPHEKDLKDEVTPDKAPKKDPKAASKEEVKEDPAKDYE) is disordered.

This sequence belongs to the GrpE family. As to quaternary structure, homodimer.

Its subcellular location is the cytoplasm. Participates actively in the response to hyperosmotic and heat shock by preventing the aggregation of stress-denatured proteins, in association with DnaK and GrpE. It is the nucleotide exchange factor for DnaK and may function as a thermosensor. Unfolded proteins bind initially to DnaJ; upon interaction with the DnaJ-bound protein, DnaK hydrolyzes its bound ATP, resulting in the formation of a stable complex. GrpE releases ADP from DnaK; ATP binding to DnaK triggers the release of the substrate protein, thus completing the reaction cycle. Several rounds of ATP-dependent interactions between DnaJ, DnaK and GrpE are required for fully efficient folding. The chain is Protein GrpE from Lactobacillus gasseri (strain ATCC 33323 / DSM 20243 / BCRC 14619 / CIP 102991 / JCM 1131 / KCTC 3163 / NCIMB 11718 / NCTC 13722 / AM63).